We begin with the raw amino-acid sequence, 238 residues long: Pyridoxine 5'-phosphate synthase (238 aa).

Residue Asn-6 participates in 3-amino-2-oxopropyl phosphate binding. 8–9 (DH) is a binding site for 1-deoxy-D-xylulose 5-phosphate. Arg-17 contacts 3-amino-2-oxopropyl phosphate. The active-site Proton acceptor is His-42. 1-deoxy-D-xylulose 5-phosphate-binding residues include Arg-44 and His-49. Glu-69 functions as the Proton acceptor in the catalytic mechanism. Residue Thr-99 coordinates 1-deoxy-D-xylulose 5-phosphate. Residue His-186 is the Proton donor of the active site. 3-amino-2-oxopropyl phosphate contacts are provided by residues Gly-187 and 208 to 209 (GH).

It belongs to the PNP synthase family. Homooctamer; tetramer of dimers.

Its subcellular location is the cytoplasm. The enzyme catalyses 3-amino-2-oxopropyl phosphate + 1-deoxy-D-xylulose 5-phosphate = pyridoxine 5'-phosphate + phosphate + 2 H2O + H(+). Its pathway is cofactor biosynthesis; pyridoxine 5'-phosphate biosynthesis; pyridoxine 5'-phosphate from D-erythrose 4-phosphate: step 5/5. Functionally, catalyzes the complicated ring closure reaction between the two acyclic compounds 1-deoxy-D-xylulose-5-phosphate (DXP) and 3-amino-2-oxopropyl phosphate (1-amino-acetone-3-phosphate or AAP) to form pyridoxine 5'-phosphate (PNP) and inorganic phosphate. The chain is Pyridoxine 5'-phosphate synthase from Anaplasma marginale (strain St. Maries).